The following is a 602-amino-acid chain: Elongation factor 4 (602 aa).

The region spanning 7 to 188 (ENIRNFSIIA…AIIELIPPPK (182 aa)) is the tr-type G domain. Residues 19 to 24 (DHGKST) and 135 to 138 (NKID) each bind GTP.

Belongs to the TRAFAC class translation factor GTPase superfamily. Classic translation factor GTPase family. LepA subfamily.

It localises to the cell inner membrane. It catalyses the reaction GTP + H2O = GDP + phosphate + H(+). Its function is as follows. Required for accurate and efficient protein synthesis under certain stress conditions. May act as a fidelity factor of the translation reaction, by catalyzing a one-codon backward translocation of tRNAs on improperly translocated ribosomes. Back-translocation proceeds from a post-translocation (POST) complex to a pre-translocation (PRE) complex, thus giving elongation factor G a second chance to translocate the tRNAs correctly. Binds to ribosomes in a GTP-dependent manner. This Chlamydia caviae (strain ATCC VR-813 / DSM 19441 / 03DC25 / GPIC) (Chlamydophila caviae) protein is Elongation factor 4.